The primary structure comprises 390 residues: Aspergillopepsin-1 (390 aa).

The signal sequence occupies residues 1–19; it reads MVNTSLLAALTAYAVAVAA. A propeptide spans 20–67 (activation peptide); that stretch reads APTAPQVKGFSVNQVAVPKGVYRHPAAQLAKAYGKYHATVPTQVAAAA. One can recognise a Peptidase A1 domain in the interval 84–387; it reads YITQVTVGDD…DASGPRLGFA (304 aa). Residues aspartate 100 and aspartate 281 contribute to the active site.

This sequence belongs to the peptidase A1 family. In terms of assembly, monomer.

It is found in the secreted. The enzyme catalyses Hydrolysis of proteins with broad specificity. Generally favors hydrophobic residues in P1 and P1', but also accepts Lys in P1, which leads to activation of trypsinogen. Does not clot milk.. Its activity is regulated as follows. Inhibited by the microbial peptide pepstatin A. Functionally, secreted aspartic endopeptidase that allows assimilation of proteinaceous substrates. The scissile peptide bond is attacked by a nucleophilic water molecule activated by two aspartic residues in the active site. Shows a broad primary substrate specificity. Favors hydrophobic residues at the P1 and P1' positions, but also accepts a lysine residue in the P1 position, leading to the activation of trypsinogen and chymotrypsinogen A. Hydrolyzes myoglobin, hemoglobin and other natural proteins. Hydrolyzes equine myoglobin between positions 'Met-1' and 'Gly-2', 'Lys-43' and 'Phe-44', and 'Leu-70' and 'Thr-71'. This chain is Aspergillopepsin-1 (pepA), found in Aspergillus pseudoglaucus (Eurotium repens).